Reading from the N-terminus, the 631-residue chain is Chaperone protein DnaK (631 aa).

Threonine 175 is modified (phosphothreonine; by autocatalysis). A disordered region spans residues 586-631; it reads GAEGAAAGAGAAGAAGAGASAGSASGSDDDTVEAEVVDDDDDKDNK. Positions 602 to 611 are enriched in low complexity; that stretch reads AGASAGSASG. A compositionally biased stretch (acidic residues) spans 612 to 631; the sequence is SDDDTVEAEVVDDDDDKDNK.

This sequence belongs to the heat shock protein 70 family.

Acts as a chaperone. The protein is Chaperone protein DnaK of Bifidobacterium longum subsp. infantis (strain ATCC 15697 / DSM 20088 / JCM 1222 / NCTC 11817 / S12).